A 104-amino-acid chain; its full sequence is Large ribosomal subunit protein bL21 (104 aa).

The protein belongs to the bacterial ribosomal protein bL21 family. In terms of assembly, part of the 50S ribosomal subunit. Contacts protein L20.

Its function is as follows. This protein binds to 23S rRNA in the presence of protein L20. This is Large ribosomal subunit protein bL21 from Nitrosococcus oceani (strain ATCC 19707 / BCRC 17464 / JCM 30415 / NCIMB 11848 / C-107).